The chain runs to 185 residues: Calcium-binding protein CML37 (185 aa).

The segment covering 1–12 (MTLAKNQKSSLS) has biased composition (polar residues). A disordered region spans residues 1–45 (MTLAKNQKSSLSRLYKKVSSKRSESSRNLEDESRTSSNSSGSSSL). Positions 21 to 34 (KRSESSRNLEDESR) are enriched in basic and acidic residues. Residues 35–44 (TSSNSSGSSS) show a composition bias toward low complexity. EF-hand domains lie at 45–80 (LNVN…LGGA), 81–116 (LSSR…EDGS), 119–154 (ERRK…LGES), and 155–185 (CTVD…LMMR). 9 residues coordinate Ca(2+): Asp58, Asn60, Asp62, Lys64, Glu69, Asp94, Asp96, Asp98, and Glu105. Residues Asp168, Asn170, Asp172, and Glu179 each contribute to the Ca(2+) site.

As to quaternary structure, binds to ABCG36. Expressed in cotyledons, stipule, young leaves and at the hypocotyl-root junction. In mature root, expressed in the stele, cortex, emerging lateral root, root tip and root cap. In mature plant, expressed at the base of cauline and floral branches, and in rosette and cauline leaves. Expressed from stage 9 to 14 of flower development in anthers. At stage 15, expressed in carpel, sepals, petals and pollen until dehiscence. Expressed in developing seeds and young siliques.

In terms of biological role, potential calcium sensor that binds calcium in vitro. The chain is Calcium-binding protein CML37 from Arabidopsis thaliana (Mouse-ear cress).